Reading from the N-terminus, the 153-residue chain is 3-hydroxyacyl-[acyl-carrier-protein] dehydratase FabZ (153 aa).

His-56 is an active-site residue.

The protein belongs to the thioester dehydratase family. FabZ subfamily.

It localises to the cytoplasm. It carries out the reaction a (3R)-hydroxyacyl-[ACP] = a (2E)-enoyl-[ACP] + H2O. In terms of biological role, involved in unsaturated fatty acids biosynthesis. Catalyzes the dehydration of short chain beta-hydroxyacyl-ACPs and long chain saturated and unsaturated beta-hydroxyacyl-ACPs. This is 3-hydroxyacyl-[acyl-carrier-protein] dehydratase FabZ from Nitrosomonas europaea (strain ATCC 19718 / CIP 103999 / KCTC 2705 / NBRC 14298).